We begin with the raw amino-acid sequence, 433 residues long: Phosphoglycerate kinase, chloroplastic (433 aa).

The transit peptide at 1–28 directs the protein to the chloroplast; sequence GASFSLHVLSKINSYKSQSTKPIRGVAS. (2R)-3-phosphoglycerate contacts are provided by Ala-51, Asp-52, Asn-54, Arg-68, Ser-90, His-91, Gly-93, Arg-94, Arg-149, His-181, and Arg-182. Residue Gly-227 coordinates ADP. CDP is bound at residue Gly-227. Positions 229 and 233 each coordinate AMP. ATP is bound at residue Lys-233. Gly-251 is an ADP binding site. Gly-251 is a CDP binding site. AMP contacts are provided by Gly-252 and Gly-324. ATP is bound by residues Gly-252 and Gly-324. Positions 349 and 354 each coordinate CDP. Position 354 (Phe-354) interacts with ADP. Glu-355 serves as a coordination point for AMP. ATP contacts are provided by Glu-355, Asp-386, and Ser-387. A Mg(2+)-binding site is contributed by Asp-386.

Belongs to the phosphoglycerate kinase family. As to quaternary structure, monomer. Mg(2+) serves as cofactor.

Its subcellular location is the plastid. It localises to the chloroplast. It carries out the reaction (2R)-3-phosphoglycerate + ATP = (2R)-3-phospho-glyceroyl phosphate + ADP. It participates in carbohydrate biosynthesis; Calvin cycle. This Spinacia oleracea (Spinach) protein is Phosphoglycerate kinase, chloroplastic.